The chain runs to 890 residues: MGVVVAETSQNGDISLLSEKKFTVPQPPSIEEFSIVKPISRGAFGKVYLARRKNNNKLFAVKVVKKADMINKNMVQQVQAERDALALSKSPFIVHLYYSLQSANNIYLIMEYLIGGDVKSLLHIYGYFDEEMAVKYISEVALALDYLHRHGIIHRDLKPDNMLISNEGHIKLTDFGLSKVTLKRELSMMDILTTPSMAKPKRDYSRTPGQVLSLISSLGFNTPVGGRTQGSIAQQTEGMRGNASTPLLMKKKENSVKGNKLMISCPEAGLSSPSMPVKCLTPNLLKCRTPFTTSSTSSQSRICLSSLESECGMSPRWENCSQDAEAPPYLNSSRVKDCSSEQARSKKPMGSSASQNLKHLEFAFSPIVDRRTGKKAGFQDETGELSDTPLATLGAKGVIRKCLYDNNAQEKHKDLGKDDQGELEKLTISPDSPPWLANGSVAPIQFNDDEIIEKMGIKRNYDLVEKSPEQEVLQDKKTNTDYKRGCTITGYPVSQSTGLTMEINSLFLSELRSSTNNYASDRKSEDDYISAPRTHENLGSGNTIAKNLLCELDDNCERDGEANSNSGCEEGENQKESLNQDSESSSADMSVTENQIERELCQVDKSIKELSFEESPSESNEETTPENKGMAFMAENDALKREPNRSVLPETLHNVLASPAPTSAMAHPRRKPMVAFRSYNSPINGSNLSEPSRISMNSADKIHFSLGCTGSFPMAVTPAQKKVQGLTETPYRTPKTVRRGGLQAENERILGTPDYLAPELLLGKSHGPAVDWWALGVCLFEFLTGIPPFNDETPSQVFQNILNRDIPWPEEEETLSVNAQSAIEILLAIDQTKRAGLKDLKAHHLFHAIEWDDLQNLPMPFIPQPDDETDTTYFEARNNAQHLKVSGFSL.

Residues 33 to 846 (FSIVKPISRG…LKDLKAHHLF (814 aa)) form the Protein kinase domain. ATP-binding positions include 39 to 47 (ISRGAFGKV) and Lys62. Asp156 acts as the Proton acceptor in catalysis. Disordered regions lie at residues 324–353 (AEAPPYLNSSRVKDCSSEQARSKKPMGSSA), 412–434 (HKDLGKDDQGELEKLTISPDSPP), 517–541 (NYASDRKSEDDYISAPRTHENLGSG), 559–592 (DGEANSNSGCEEGENQKESLNQDSESSSADMSVT), and 609–628 (ELSFEESPSESNEETTPENK). Residues 412-425 (HKDLGKDDQGELEK) are compositionally biased toward basic and acidic residues. The span at 576 to 592 (ESLNQDSESSSADMSVT) shows a compositional bias: polar residues. Acidic residues predominate over residues 615–624 (SPSESNEETT). Thr752 is modified (phosphothreonine; by CDK1). One can recognise an AGC-kinase C-terminal domain in the interval 847 to 890 (HAIEWDDLQNLPMPFIPQPDDETDTTYFEARNNAQHLKVSGFSL).

Belongs to the protein kinase superfamily. AGC Ser/Thr protein kinase family. In terms of processing, phosphorylation at Thr-752 by CDK1 during M phase activates its kinase activity. Maximum phosphorylation occurs in prometaphase.

It is found in the cytoplasm. The protein resides in the cytoskeleton. The protein localises to the microtubule organizing center. Its subcellular location is the centrosome. It localises to the nucleus. It catalyses the reaction L-seryl-[protein] + ATP = O-phospho-L-seryl-[protein] + ADP + H(+). The catalysed reaction is L-threonyl-[protein] + ATP = O-phospho-L-threonyl-[protein] + ADP + H(+). Functionally, serine/threonine kinase that plays a key role in M phase by acting as a regulator of mitosis entry and maintenance. Acts by promoting the inactivation of protein phosphatase 2A (PP2A) during M phase: does not directly inhibit PP2A but acts by mediating phosphorylation and subsequent activation of arpp19 and ensa at 'Ser-67', 2 phosphatase inhibitors that specifically inhibit the ppp2r2d (PR55-delta) subunit of PP2A. Inactivation of PP2A during M phase is essential to keep cyclin-B1-CDK1 activity high. Following DNA damage, it is also involved in checkpoint recovery by being inhibited. The protein is Serine/threonine-protein kinase greatwall (mastl) of Xenopus tropicalis (Western clawed frog).